The following is a 303-amino-acid chain: Glucose-1-phosphate thymidylyltransferase (303 aa).

The Mg(2+) site is built by aspartate 108 and aspartate 222.

Belongs to the glucose-1-phosphate thymidylyltransferase family. Mg(2+) serves as cofactor.

It catalyses the reaction dTTP + alpha-D-glucose 1-phosphate + H(+) = dTDP-alpha-D-glucose + diphosphate. In terms of biological role, catalyzes the formation of dTDP-glucose, from dTTP and glucose 1-phosphate, as well as its pyrophosphorolysis. Probably involved in the biosynthesis of the acarviose moiety of the alpha-glucosidase inhibitor acarbose. The polypeptide is Glucose-1-phosphate thymidylyltransferase (acbA) (Actinoplanes sp. (strain ATCC 31044 / CBS 674.73 / SE50/110)).